The following is a 309-amino-acid chain: Ribonuclease Z (309 aa).

Residues His63, His65, Asp67, His68, His145, Asp216, and His274 each coordinate Zn(2+). The active-site Proton acceptor is the Asp67.

The protein belongs to the RNase Z family. Homodimer. The cofactor is Zn(2+).

The enzyme catalyses Endonucleolytic cleavage of RNA, removing extra 3' nucleotides from tRNA precursor, generating 3' termini of tRNAs. A 3'-hydroxy group is left at the tRNA terminus and a 5'-phosphoryl group is left at the trailer molecule.. Its function is as follows. Zinc phosphodiesterase, which displays some tRNA 3'-processing endonuclease activity. Probably involved in tRNA maturation, by removing a 3'-trailer from precursor tRNA. The sequence is that of Ribonuclease Z from Streptococcus agalactiae serotype Ia (strain ATCC 27591 / A909 / CDC SS700).